The sequence spans 615 residues: Zinc finger protein 653 (615 aa).

Disordered regions lie at residues 1 to 48 (MAER…ARRR), 95 to 117 (RSGR…KRRR), 176 to 236 (PLSD…SSGL), and 401 to 432 (EEKE…ELDG). Residues 107-118 (PKKPKRKKRRRR) carry the Nuclear localization signal motif. Over residues 108–117 (KKPKRKKRRR) the composition is skewed to basic residues. A compositionally biased stretch (low complexity) spans 193-205 (AGSSDSSSSGSAS). The span at 226 to 236 (TPTSPVGSSGL) shows a compositional bias: polar residues. Residues 419-432 (AEPEAEADGEELDG) show a composition bias toward acidic residues. A Nuclear localization signal motif is present at residues 445–451 (EPEKRRR). 5 consecutive C2H2-type zinc fingers follow at residues 467-492 (FHCP…NLVH), 498-522 (KVCP…MIIH), 528-550 (FTCE…RRTH), 556-578 (LQCE…MKKH), and 586-609 (FTCD…LKSH).

It belongs to the krueppel C2H2-type zinc-finger protein family. As to quaternary structure, interacts with NR5A1. In terms of tissue distribution, highly expressed in testis, cerebellum, temporal lobe, hippocampus and the adrenal gland. Moderately expressed in spleen, uterus, thymus, pancreas, kidney, stomach and rectum.

The protein resides in the nucleus. Transcriptional repressor. May repress NR5A1, PPARG, NR1H3, NR4A2, ESR1 and NR3C1 transcriptional activity. The chain is Zinc finger protein 653 (ZNF653) from Homo sapiens (Human).